A 242-amino-acid polypeptide reads, in one-letter code: Uridylate kinase (242 aa).

Residue 15 to 18 participates in ATP binding; that stretch reads KLSG. Residues 23 to 28 are involved in allosteric activation by GTP; it reads GDEGFG. Residue glycine 57 participates in UMP binding. Glycine 58 and arginine 62 together coordinate ATP. UMP contacts are provided by residues aspartate 77 and 138–145; that span reads TGNPFCTT. ATP contacts are provided by threonine 165, tyrosine 171, and aspartate 174.

Belongs to the UMP kinase family. Homohexamer.

It is found in the cytoplasm. The catalysed reaction is UMP + ATP = UDP + ADP. Its pathway is pyrimidine metabolism; CTP biosynthesis via de novo pathway; UDP from UMP (UMPK route): step 1/1. Its activity is regulated as follows. Allosterically activated by GTP. Inhibited by UTP. Functionally, catalyzes the reversible phosphorylation of UMP to UDP. The protein is Uridylate kinase of Shewanella sp. (strain MR-4).